The chain runs to 289 residues: N-methyltransferase FrzE (289 aa).

This sequence belongs to the methyltransferase superfamily.

It carries out the reaction (1S,4S)-4-[(4-hydroxyphenyl)methyl]-2,5-diazaspiro[bicyclo[3.2.1]octane-6,1'-cyclohexan]-4'-one + S-adenosyl-L-methionine = (1S,4S)-4-[(4-hydroxyphenyl)methyl]-2-methyl-2,5-diazaspiro[bicyclo[3.2.1]octane-6,1'-cyclohexan]-4'-one + S-adenosyl-L-homocysteine + H(+). It catalyses the reaction (1S,4S)-4-[(4-methoxyphenyl)methyl]-2,5-diazaspiro[bicyclo[3.2.1]octane-6,1'-cyclohexan]-4'-one + S-adenosyl-L-methionine = (1S,4S)-4-[(4-methoxyphenyl)methyl]-2-methyl-2,5-diazaspiro[bicyclo[3.2.1]octane-6,1'-cyclohexan]-4'-one + S-adenosyl-L-homocysteine + H(+). The protein operates within secondary metabolite biosynthesis. N-methyltransferase; part of the gene cluster that mediates the biosynthesis of the alkaloid (-)-FR901483, a potent immunosuppressant that shows efficacy in animal models and a probable inhibitor of purine nucleotide biosynthesis by targeting phosphoribosylpyrophosphate amidotransferase (PPAT). Within the pathway, FrzE methylates the amine at position C10'. The biosynthesis of (-)-FR901483 starts with the condensation of two L-tyrosines to yield (S,S)-dityrosyl-piperazine. This process occurs in 3 steps with the non-canonical nonribosomal peptide synthetase FrzA catalyzing the reduction of L-tyrosine into L-tyrosinal, the spontaneous condensation of 2 L-tyrosinal units, and the subsequent reduction by the NmrA-like family domain-containing oxidoreductase FrzB. The cytochrome P450 monooxygenase FrzC then performs coupling between N10 and C1' to morph the piperazine into a 1,4-diazabicyclo[3.2.1]octane spiro-fused to a 2,5-cyclohexadienone. The dienone portion is further reduced to cyclohexanone by the flavin-dependent reductase FrzD. The methyltranserases (MTs) FrzE and FrzF are then involved in the methylation at the C10' amine and the C4 phenolic oxygen, respectively. The order of the two MTs appear to be interchangeable. Cleavage of the C9-N10' bond by the dioxygenase FrzG then leads to formation of a conjugated iminium. In addition to the oxidation of C9, an additional dehydrogenation between C7 and C8 can occur to give a likely shunt product. The next biosynthetic step is the intramolecular aldol condensation catalyzed by the newly identified aldolase FrzH to yield an aza-tricyclic product with the formation of a C9-C3' bond. The short-chain dehydrogenase/reductase FrzI then produces dephospho-(-)-FR901483 that is phosphorylated at C4'-OH into (-)-FR901483 by the phosphotransferase FrzJ. The protein is N-methyltransferase FrzE of Cladobotryum sp.